The sequence spans 338 residues: RNA 3'-terminal phosphate cyclase (338 aa).

ATP-binding positions include glutamine 103 and 283–287 (YLADQ). Histidine 308 acts as the Tele-AMP-histidine intermediate in catalysis.

The protein belongs to the RNA 3'-terminal cyclase family. Type 1 subfamily.

The protein localises to the cytoplasm. The enzyme catalyses a 3'-end 3'-phospho-ribonucleotide-RNA + ATP = a 3'-end 2',3'-cyclophospho-ribonucleotide-RNA + AMP + diphosphate. In terms of biological role, catalyzes the conversion of 3'-phosphate to a 2',3'-cyclic phosphodiester at the end of RNA. The mechanism of action of the enzyme occurs in 3 steps: (A) adenylation of the enzyme by ATP; (B) transfer of adenylate to an RNA-N3'P to produce RNA-N3'PP5'A; (C) and attack of the adjacent 2'-hydroxyl on the 3'-phosphorus in the diester linkage to produce the cyclic end product. The biological role of this enzyme is unknown but it is likely to function in some aspects of cellular RNA processing. The polypeptide is RNA 3'-terminal phosphate cyclase (Escherichia coli O17:K52:H18 (strain UMN026 / ExPEC)).